Here is a 410-residue protein sequence, read N- to C-terminus: Histidine--tRNA ligase (410 aa).

The protein belongs to the class-II aminoacyl-tRNA synthetase family. In terms of assembly, homodimer.

The protein resides in the cytoplasm. The catalysed reaction is tRNA(His) + L-histidine + ATP = L-histidyl-tRNA(His) + AMP + diphosphate + H(+). The protein is Histidine--tRNA ligase of Campylobacter hominis (strain ATCC BAA-381 / DSM 21671 / CCUG 45161 / LMG 19568 / NCTC 13146 / CH001A).